We begin with the raw amino-acid sequence, 542 residues long: Apolipoprotein N-acyltransferase (542 aa).

6 helical membrane passes run Ala-26–Val-46, Ile-54–Leu-74, Leu-89–Phe-109, Tyr-113–Tyr-133, Trp-163–Phe-183, and Phe-187–Tyr-207. The CN hydrolase domain occupies Leu-220–Val-499. The active-site Proton acceptor is Glu-264. Residue Lys-349 is part of the active site. The Nucleophile role is filled by Cys-404. A helical membrane pass occupies residues Phe-509–Phe-529.

The protein belongs to the CN hydrolase family. Apolipoprotein N-acyltransferase subfamily.

It localises to the cell inner membrane. It catalyses the reaction N-terminal S-1,2-diacyl-sn-glyceryl-L-cysteinyl-[lipoprotein] + a glycerophospholipid = N-acyl-S-1,2-diacyl-sn-glyceryl-L-cysteinyl-[lipoprotein] + a 2-acyl-sn-glycero-3-phospholipid + H(+). It participates in protein modification; lipoprotein biosynthesis (N-acyl transfer). Its function is as follows. Catalyzes the phospholipid dependent N-acylation of the N-terminal cysteine of apolipoprotein, the last step in lipoprotein maturation. This Chlamydia muridarum (strain MoPn / Nigg) protein is Apolipoprotein N-acyltransferase.